The sequence spans 162 residues: Caveolin-2 (162 aa).

The Cytoplasmic segment spans residues 1–86 (MGLESEKADV…FEISKYVLYK (86 aa)). Y19 is modified (phosphotyrosine). 3 positions are modified to phosphoserine: S20, S23, and S36. The helical intramembrane region spans 87 to 107 (FLTFFLAIPLAFAAGILFAIL). Residues 108-162 (SCLHIWIIMPFVKTCLMVLPSVQTIWKSVTDVVIAPLCTSVGRSFSSVSLQLSQD) are Cytoplasmic-facing.

This sequence belongs to the caveolin family. As to quaternary structure, monomer or homodimer. Interacts with CAV1; the interaction forms a stable heterooligomeric complex that is required for targeting to lipid rafts and for caveolae formation. Tyrosine phosphorylated forms do not form heterooligomers with the Tyr-19-phosphorylated form existing as a monomer or dimer. Interacts (tyrosine phosphorylated form) with the SH2 domain-containing proteins, RASA1, NCK1 and SRC. Interacts (tyrosine phosphorylated form) with INSR. Interacts (Tyr-19 phosphorylated form) with MAPK1 (phosphorylated form); the interaction, promoted by insulin, leads to nuclear location and MAPK1 activation. Interacts with STAT3; the interaction is increased on insulin-induced tyrosine phosphorylation leading to STAT activation. Phosphorylated on serine and tyrosine residues. CAV1 promotes phosphorylation on Ser-23 which then targets the complex to the plasma membrane, lipid rafts and caveolae. Phosphorylation on Ser-36 appears to modulate mitosis in endothelial cells. Phosphorylation on Tyr-19 is required for insulin-induced phosphorylation of MAPK1 and DNA binding of STAT3. Tyrosine phosphorylation is induced by both EGF and insulin.

The protein localises to the nucleus. Its subcellular location is the golgi apparatus membrane. It localises to the cell membrane. The protein resides in the membrane. It is found in the caveola. May act as a scaffolding protein within caveolar membranes. Interacts directly with G-protein alpha subunits and can functionally regulate their activity. Acts as an accessory protein in conjunction with CAV1 in targeting to lipid rafts and driving caveolae formation. The Ser-36 phosphorylated form has a role in modulating mitosis in endothelial cells. Positive regulator of cellular mitogenesis of the MAPK signaling pathway. Required for the insulin-stimulated nuclear translocation and activation of MAPK1 and STAT3, and the subsequent regulation of cell cycle progression. The chain is Caveolin-2 (CAV2) from Echinops telfairi (Lesser hedgehog tenrec).